The sequence spans 285 residues: RNA 5'-monophosphate methyltransferase (285 aa).

S-adenosyl-L-methionine-binding positions include R46, N77, D111, 136–137, and M165; that span reads DI. A Bin3-type SAM domain is found at 53 to 275; the sequence is ELLRQLFPPE…KHTHETQAIP (223 aa).

The protein belongs to the methyltransferase superfamily. Interacts with DICER1; the interaction may be mediated by RNA.

The protein localises to the cytoplasm. The enzyme catalyses a 5'-end 5'-phospho-ribonucleoside-RNA + S-adenosyl-L-methionine = a 5'-end (5'-methylphospho)-ribonucleoside-RNA + S-adenosyl-L-homocysteine. The catalysed reaction is a 5'-end 5'-phospho-ribonucleoside-RNA + 2 S-adenosyl-L-methionine = a 5'-end (5'-bismethylphospho)-ribonucleoside-RNA + 2 S-adenosyl-L-homocysteine. In terms of biological role, O-methyltransferase that specifically monomethylates 5'-monophosphate of cytoplasmic histidyl tRNA (tRNA(His)), acting as a capping enzyme by protecting tRNA(His) from cleavage by DICER1. Also able, with less efficiently, to methylate the 5' monophosphate of a subset of pre-miRNAs, acting as a negative regulator of miRNA processing. The 5' monophosphate of pre-miRNAs is recognized by DICER1 and is required for pre-miRNAs processing: methylation at this position reduces the processing of pre-miRNAs by DICER1. Was also reported to mediate dimethylation of pre-miR-145; however dimethylation cannot be reproduced by another group which observes a monomethylation of pre-miR-145. This Mus musculus (Mouse) protein is RNA 5'-monophosphate methyltransferase.